The primary structure comprises 210 residues: Ribosomal RNA large subunit methyltransferase E (210 aa).

Residues Gly-61, Trp-63, Asp-81, Asp-97, and Asp-122 each contribute to the S-adenosyl-L-methionine site. Catalysis depends on Lys-162, which acts as the Proton acceptor. Basic and acidic residues predominate over residues 187–196 (KPEASRKRSP). Positions 187-210 (KPEASRKRSPEVYALGQGKRAHMK) are disordered.

It belongs to the class I-like SAM-binding methyltransferase superfamily. RNA methyltransferase RlmE family.

The protein resides in the cytoplasm. The enzyme catalyses uridine(2552) in 23S rRNA + S-adenosyl-L-methionine = 2'-O-methyluridine(2552) in 23S rRNA + S-adenosyl-L-homocysteine + H(+). Its function is as follows. Specifically methylates the uridine in position 2552 of 23S rRNA at the 2'-O position of the ribose in the fully assembled 50S ribosomal subunit. The chain is Ribosomal RNA large subunit methyltransferase E from Stenotrophomonas maltophilia (strain R551-3).